Reading from the N-terminus, the 181-residue chain is Cytolethal distending toxin subunit C (181 aa).

An N-terminal signal peptide occupies residues 1-15 (MKKLAIVFTMLLIAG). Cys16 is lipidated: N-palmitoyl cysteine. Cys16 is lipidated: S-diacylglycerol cysteine. The region spanning 79-181 (QSGWIMIRTP…NPLNTESPII (103 aa)) is the Ricin B-type lectin domain.

As to quaternary structure, heterotrimer of 3 subunits, CdtA, CdtB and CdtC.

The protein localises to the cell outer membrane. In terms of biological role, part of the tripartite complex that is required for the CDT activity. CdtC, along with CdtA, probably forms a heterodimeric subunit required for the delivery of CdtB. The chain is Cytolethal distending toxin subunit C (cdtC) from Escherichia coli.